The chain runs to 249 residues: 2,3-bisphosphoglycerate-dependent phosphoglycerate mutase (249 aa).

Residues 8 to 15 (RHGESTWN), 21 to 22 (TG), arginine 60, 87 to 90 (ERHY), lysine 98, 114 to 115 (RR), and 183 to 184 (GN) each bind substrate. Residue histidine 9 is the Tele-phosphohistidine intermediate of the active site. The active-site Proton donor/acceptor is the glutamate 87.

This sequence belongs to the phosphoglycerate mutase family. BPG-dependent PGAM subfamily.

The enzyme catalyses (2R)-2-phosphoglycerate = (2R)-3-phosphoglycerate. It participates in carbohydrate degradation; glycolysis; pyruvate from D-glyceraldehyde 3-phosphate: step 3/5. In terms of biological role, catalyzes the interconversion of 2-phosphoglycerate and 3-phosphoglycerate. The chain is 2,3-bisphosphoglycerate-dependent phosphoglycerate mutase from Methanoregula boonei (strain DSM 21154 / JCM 14090 / 6A8).